Here is a 576-residue protein sequence, read N- to C-terminus: Glutamine-dependent NAD(+) synthetase (576 aa).

One can recognise a CN hydrolase domain in the interval 4-246 (LRVTLAQLNP…EEIITVDLDL (243 aa)). The Proton acceptor; for glutaminase activity role is filled by E44. The active-site For glutaminase activity is the K112. Y118 contacts L-glutamine. The active-site Nucleophile; for glutaminase activity is the C148. The L-glutamine site is built by S176 and K182. The ligase stretch occupies residues 292–576 (PVREEEMFRA…PITNRFKEPL (285 aa)). Residue 321–328 (GLSGGMDS) participates in ATP binding. A deamido-NAD(+)-binding site is contributed by N404. An ATP-binding site is contributed by T428. 2 residues coordinate deamido-NAD(+): E433 and K545.

This sequence in the C-terminal section; belongs to the NAD synthetase family.

It carries out the reaction deamido-NAD(+) + L-glutamine + ATP + H2O = L-glutamate + AMP + diphosphate + NAD(+) + H(+). Its pathway is cofactor biosynthesis; NAD(+) biosynthesis; NAD(+) from deamido-NAD(+) (L-Gln route): step 1/1. Its function is as follows. Catalyzes the ATP-dependent amidation of deamido-NAD to form NAD. Uses L-glutamine as a nitrogen source. The polypeptide is Glutamine-dependent NAD(+) synthetase (nadE2) (Thermotoga maritima (strain ATCC 43589 / DSM 3109 / JCM 10099 / NBRC 100826 / MSB8)).